Reading from the N-terminus, the 280-residue chain is Phosphatidylserine decarboxylase proenzyme (280 aa).

Catalysis depends on charge relay system; for autoendoproteolytic cleavage activity residues aspartate 88, histidine 144, and serine 247. The active-site Schiff-base intermediate with substrate; via pyruvic acid; for decarboxylase activity is serine 247. Serine 247 is modified (pyruvic acid (Ser); by autocatalysis).

It belongs to the phosphatidylserine decarboxylase family. PSD-B subfamily. Prokaryotic type I sub-subfamily. In terms of assembly, heterodimer of a large membrane-associated beta subunit and a small pyruvoyl-containing alpha subunit. It depends on pyruvate as a cofactor. Is synthesized initially as an inactive proenzyme. Formation of the active enzyme involves a self-maturation process in which the active site pyruvoyl group is generated from an internal serine residue via an autocatalytic post-translational modification. Two non-identical subunits are generated from the proenzyme in this reaction, and the pyruvate is formed at the N-terminus of the alpha chain, which is derived from the carboxyl end of the proenzyme. The autoendoproteolytic cleavage occurs by a canonical serine protease mechanism, in which the side chain hydroxyl group of the serine supplies its oxygen atom to form the C-terminus of the beta chain, while the remainder of the serine residue undergoes an oxidative deamination to produce ammonia and the pyruvoyl prosthetic group on the alpha chain. During this reaction, the Ser that is part of the protease active site of the proenzyme becomes the pyruvoyl prosthetic group, which constitutes an essential element of the active site of the mature decarboxylase.

It is found in the cell membrane. It catalyses the reaction a 1,2-diacyl-sn-glycero-3-phospho-L-serine + H(+) = a 1,2-diacyl-sn-glycero-3-phosphoethanolamine + CO2. It functions in the pathway phospholipid metabolism; phosphatidylethanolamine biosynthesis; phosphatidylethanolamine from CDP-diacylglycerol: step 2/2. Its function is as follows. Catalyzes the formation of phosphatidylethanolamine (PtdEtn) from phosphatidylserine (PtdSer). This chain is Phosphatidylserine decarboxylase proenzyme, found in Xanthomonas axonopodis pv. citri (strain 306).